A 254-amino-acid polypeptide reads, in one-letter code: Dihydroorotate dehydrogenase B (NAD(+)), electron transfer subunit (254 aa).

The 99-residue stretch at Met1–Leu99 folds into the FAD-binding FR-type domain. FAD is bound by residues Arg50 to Ser53, Leu67 to Arg69, and Gly74 to Thr75. The [2Fe-2S] cluster site is built by Cys218, Cys223, Cys226, and Cys241.

This sequence belongs to the PyrK family. As to quaternary structure, heterotetramer of 2 PyrK and 2 PyrD type B subunits. [2Fe-2S] cluster is required as a cofactor. The cofactor is FAD.

It functions in the pathway pyrimidine metabolism; UMP biosynthesis via de novo pathway; orotate from (S)-dihydroorotate (NAD(+) route): step 1/1. Functionally, responsible for channeling the electrons from the oxidation of dihydroorotate from the FMN redox center in the PyrD type B subunit to the ultimate electron acceptor NAD(+). The polypeptide is Dihydroorotate dehydrogenase B (NAD(+)), electron transfer subunit (Listeria innocua serovar 6a (strain ATCC BAA-680 / CLIP 11262)).